A 434-amino-acid polypeptide reads, in one-letter code: Nicotinate phosphoribosyltransferase (434 aa).

The residue at position 242 (H242) is a Phosphohistidine; by autocatalysis.

It belongs to the NAPRTase family. Transiently phosphorylated on a His residue during the reaction cycle. Phosphorylation strongly increases the affinity for substrates and increases the rate of nicotinate D-ribonucleotide production. Dephosphorylation regenerates the low-affinity form of the enzyme, leading to product release.

It carries out the reaction nicotinate + 5-phospho-alpha-D-ribose 1-diphosphate + ATP + H2O = nicotinate beta-D-ribonucleotide + ADP + phosphate + diphosphate. The protein operates within cofactor biosynthesis; NAD(+) biosynthesis; nicotinate D-ribonucleotide from nicotinate: step 1/1. Functionally, catalyzes the synthesis of beta-nicotinate D-ribonucleotide from nicotinate and 5-phospho-D-ribose 1-phosphate at the expense of ATP. The polypeptide is Nicotinate phosphoribosyltransferase (Chelativorans sp. (strain BNC1)).